The chain runs to 388 residues: Succinate--CoA ligase [ADP-forming] subunit beta (388 aa).

The ATP-grasp domain occupies 9 to 244 (KQLFARYGLP…QSQEDPREAQ (236 aa)). ATP is bound by residues K46, 53-55 (GRG), E99, T102, and E107. Mg(2+)-binding residues include N199 and D213. Residues N264 and 321 to 323 (GIV) contribute to the substrate site.

This sequence belongs to the succinate/malate CoA ligase beta subunit family. As to quaternary structure, heterotetramer of two alpha and two beta subunits. Requires Mg(2+) as cofactor.

It catalyses the reaction succinate + ATP + CoA = succinyl-CoA + ADP + phosphate. The catalysed reaction is GTP + succinate + CoA = succinyl-CoA + GDP + phosphate. It functions in the pathway carbohydrate metabolism; tricarboxylic acid cycle; succinate from succinyl-CoA (ligase route): step 1/1. Its function is as follows. Succinyl-CoA synthetase functions in the citric acid cycle (TCA), coupling the hydrolysis of succinyl-CoA to the synthesis of either ATP or GTP and thus represents the only step of substrate-level phosphorylation in the TCA. The beta subunit provides nucleotide specificity of the enzyme and binds the substrate succinate, while the binding sites for coenzyme A and phosphate are found in the alpha subunit. This is Succinate--CoA ligase [ADP-forming] subunit beta from Klebsiella pneumoniae (strain 342).